Here is a 447-residue protein sequence, read N- to C-terminus: Na(+)-translocating NADH-quinone reductase subunit A (447 aa).

It belongs to the NqrA family. Composed of six subunits; NqrA, NqrB, NqrC, NqrD, NqrE and NqrF.

It catalyses the reaction a ubiquinone + n Na(+)(in) + NADH + H(+) = a ubiquinol + n Na(+)(out) + NAD(+). NQR complex catalyzes the reduction of ubiquinone-1 to ubiquinol by two successive reactions, coupled with the transport of Na(+) ions from the cytoplasm to the periplasm. NqrA to NqrE are probably involved in the second step, the conversion of ubisemiquinone to ubiquinol. The polypeptide is Na(+)-translocating NADH-quinone reductase subunit A (Yersinia pseudotuberculosis serotype O:1b (strain IP 31758)).